The sequence spans 416 residues: MKRERGALSRASRALRLAPFVYLLLIQTDPLEGVNITSPVRLIHGTVGKSALLSVQYSSTSSDRPVVKWQLKRDKPVTVVQSIGTEVIGTLRPDYRDRIRLFENGSLLLSDLQLADEGTYEVEISITDDTFTGEKTINLTVDVPISRPQVLVASTTVLELSEAFTLNCSHENGTKPSYTWLKDGKPLLNDSRMLLSPDQKVLTITRVLMEDDDLYSCMVENPISQGRSLPVKITVYRRSSLYIILSTGGIFLLVTLVTVCACWKPSKRKQKKLEKQNSLEYMDQNDDRLKPEADTLPRSGEQERKNPMALYILKDKDSPETEENPAPEPRSATEPGPPGYSVSPAVPGRSPGLPIRSARRYPRSPARSPATGRTHSSPPRAPSSPGRSRSASRTLRTAGVHIIREQDEAGPVEISA.

The N-terminal stretch at 1 to 33 (MKRERGALSRASRALRLAPFVYLLLIQTDPLEG) is a signal peptide. Residues 34–142 (VNITSPVRLI…GEKTINLTVD (109 aa)) enclose the Ig-like V-type domain. The Extracellular portion of the chain corresponds to 34-240 (VNITSPVRLI…VKITVYRRSS (207 aa)). N-linked (GlcNAc...) asparagine glycosylation is found at asparagine 35, asparagine 138, asparagine 167, and asparagine 189. Residues 148 to 234 (PQVLVASTTV…QGRSLPVKIT (87 aa)) form the Ig-like C2-type domain. The cysteines at positions 168 and 217 are disulfide-linked. Residues 241-261 (LYIILSTGGIFLLVTLVTVCA) form a helical membrane-spanning segment. Residues 262-416 (CWKPSKRKQK…DEAGPVEISA (155 aa)) are Cytoplasmic-facing. A disordered region spans residues 273-416 (LEKQNSLEYM…DEAGPVEISA (144 aa)). Serine 278 carries the phosphoserine modification. A compositionally biased stretch (basic and acidic residues) spans 285 to 306 (NDDRLKPEADTLPRSGEQERKN). 2 positions are modified to phosphoserine: serine 350 and serine 377. Positions 383–398 (SSPGRSRSASRTLRTA) are enriched in low complexity.

As to quaternary structure, homodimer. Dimer formation occurs predominantly through cis interactions on the cell surface. Part of a complex containing MLC1, TRPV4, AQP4 and ATP1B1. Interacts with CLCN2. Post-translationally, N-glycosylated.

It is found in the cytoplasm. It localises to the cell membrane. Its function is as follows. Involved in regulating cell motility and cell-matrix interactions. May inhibit cell growth through suppression of cell proliferation. In glia, associates and targets CLCN2 at astrocytic processes and myelinated fiber tracts where it may regulate transcellular chloride flux involved in neuron excitability. This Homo sapiens (Human) protein is Hepatic and glial cell adhesion molecule.